Consider the following 622-residue polypeptide: Zinc finger protein ZIC 5 (622 aa).

4 disordered regions span residues 50-171, 190-223, 232-251, and 321-349; these read MHLH…KGHS, HGAP…SASG, GSAL…GHPL, and PGPH…HLPG. The span at 126–151 shows a compositional bias: pro residues; the sequence is APPPPAPPLPPSQSSSPPPPPPPPPA. Residues 329–340 show a composition bias toward pro residues; that stretch reads APPPAPPPAPAP. The C2H2-type 1; degenerate zinc finger occupies 422 to 444; sequence EDCPREGKPFKAKYKLINHIRVH. 3 C2H2-type zinc fingers span residues 450–474, 480–504, and 510–534; these read FPCP…KRTH, FKCE…SHVH, and YYCK…MKIH. Disordered regions lie at residues 531–573 and 590–622; these read MKIH…STLS and APSH…RTIH. A phosphoserine mark is found at Ser-537, Ser-541, and Ser-559. Over residues 595-604 the composition is skewed to polar residues; sequence HTPSSNGTTS.

The protein belongs to the GLI C2H2-type zinc-finger protein family.

It localises to the nucleus. Its function is as follows. Essential for neural crest development, converting cells from an epidermal fate to a neural crest cell fate. Binds to DNA. The protein is Zinc finger protein ZIC 5 (Zic5) of Mus musculus (Mouse).